Here is a 371-residue protein sequence, read N- to C-terminus: Beta-1,3-galactosyltransferase 4 (371 aa).

Topologically, residues 1–4 (MPLS) are cytoplasmic. The helical; Signal-anchor for type II membrane protein transmembrane segment at 5–25 (LFRRLLLAVLLLVIIWTLFGP) threads the bilayer. Topologically, residues 26-371 (SGLGEELLSL…RCRFIAWLNS (346 aa)) are lumenal. An N-linked (GlcNAc...) asparagine glycan is attached at Asn-143. Positions 187 to 208 (GGPSEQWQKGKEPQEETTAVHK) are disordered. The span at 194–207 (QKGKEPQEETTAVH) shows a compositional bias: basic and acidic residues.

It belongs to the glycosyltransferase 31 family. In terms of tissue distribution, highly expressed in thymus, spleen, kidney and testis and, to a lesser extent, in brain and liver.

The protein localises to the golgi apparatus membrane. The catalysed reaction is a ganglioside GM2 (d18:1(4E)) + UDP-alpha-D-galactose = a ganglioside GM1 (d18:1(4E)) + UDP + H(+). It catalyses the reaction a ganglioside GM2 + UDP-alpha-D-galactose = a ganglioside GM1 + UDP + H(+). The enzyme catalyses a ganglioside GD2 (d18:1(4E)) + UDP-alpha-D-galactose = a ganglioside GD1b (d18:1(4E)) + UDP + H(+). It carries out the reaction a ganglioside GA2 (d18:1(4E)) + UDP-alpha-D-galactose = a ganglioside GA1 (d18:1(4E)) + UDP + H(+). It functions in the pathway protein modification; protein glycosylation. Involved in GM1/GD1B/GA1 ganglioside biosynthesis. This is Beta-1,3-galactosyltransferase 4 (B3galt4) from Rattus norvegicus (Rat).